Reading from the N-terminus, the 545-residue chain is Glucose-6-phosphate isomerase (545 aa).

E351 (proton donor) is an active-site residue. Active-site residues include H382 and K510.

This sequence belongs to the GPI family.

Its subcellular location is the cytoplasm. The enzyme catalyses alpha-D-glucose 6-phosphate = beta-D-fructose 6-phosphate. Its pathway is carbohydrate biosynthesis; gluconeogenesis. It participates in carbohydrate degradation; glycolysis; D-glyceraldehyde 3-phosphate and glycerone phosphate from D-glucose: step 2/4. Catalyzes the reversible isomerization of glucose-6-phosphate to fructose-6-phosphate. This Shewanella oneidensis (strain ATCC 700550 / JCM 31522 / CIP 106686 / LMG 19005 / NCIMB 14063 / MR-1) protein is Glucose-6-phosphate isomerase.